Here is a 222-residue protein sequence, read N- to C-terminus: C-reactive protein (222 aa).

The first 19 residues, 1–19 (MEKLSLCLLVIISLSNAFA), serve as a signal peptide directing secretion. Gln-20 bears the Pyrrolidone carboxylic acid mark. Residues 24–222 (IGKAFVFPKE…EVYVKPQLWP (199 aa)) form the Pentraxin (PTX) domain. A disulfide bridge connects residues Cys-55 and Cys-113. Positions 78, 154, 155, 156, and 166 each coordinate Ca(2+).

This sequence belongs to the pentraxin family. Homopentamer. Pentraxin (or pentaxin) have a discoid arrangement of 5 non-covalently bound subunits. Interacts with FCN1; may regulate monocyte activation by FCN1. It depends on Ca(2+) as a cofactor. As to expression, found in plasma.

It is found in the secreted. Its function is as follows. Displays several functions associated with host defense: it promotes agglutination, bacterial capsular swelling, phagocytosis and complement fixation through its calcium-dependent binding to phosphorylcholine. Can interact with DNA and histones and may scavenge nuclear material released from damaged circulating cells. This Sus scrofa (Pig) protein is C-reactive protein (CRP).